A 378-amino-acid polypeptide reads, in one-letter code: Zinc transporter 7 (378 aa).

Residues 1–37 (MLPLSIKDDEYKPPKFNLFGKISGWFRSILSDKTSRN) lie on the Cytoplasmic side of the membrane. The chain crosses the membrane as a helical span at residues 38–58 (LFFFLCLNLSFAFVELLYGIW). Residues 59-67 (SNCLGLISD) are Lumenal-facing. A helical transmembrane segment spans residues 68-88 (SFHMFFDSTAILAGLAASVIS). The Cytoplasmic segment spans residues 89 to 102 (KWRDNDAFSYGYVR). The helical transmembrane segment at 103 to 123 (AEVLAGFVNGLFLIFTAFFIF) threads the bilayer. Topologically, residues 124-140 (SEGVERALAPPDVHHER) are lumenal. The chain crosses the membrane as a helical span at residues 141-161 (LLLVSILGFVVNLVGIFVFNH). Residues 161–220 (HGGHGHSHGSGHGHSHSLFNGALDHSHGHEDHCHSHGAKHGGAHSHDHDHAHGHGHLHSH) are his-rich loop. Topologically, residues 162–238 (GGHGHSHGSG…AGPSRQILQG (77 aa)) are cytoplasmic. The segment at 186-228 (SHGHEDHCHSHGAKHGGAHSHDHDHAHGHGHLHSHDGPSFKET) is disordered. The span at 204 to 224 (HSHDHDHAHGHGHLHSHDGPS) shows a compositional bias: basic and acidic residues. Residues 239-259 (VFLHILADTLGSIGVIASAIM) form a helical membrane-spanning segment. The Lumenal portion of the chain corresponds to 260–264 (MQNFG). The helical transmembrane segment at 265-285 (LMIADPICSILIAILIVVSVI) threads the bilayer. At 286–378 (PLLRESIGIL…LYVQIDFAAM (93 aa)) the chain is on the cytoplasmic side.

This sequence belongs to the cation diffusion facilitator (CDF) transporter (TC 2.A.4) family. SLC30A subfamily. Homooligomer.

It localises to the golgi apparatus membrane. The protein resides in the cytoplasmic vesicle. The protein localises to the golgi apparatus. Its subcellular location is the trans-Golgi network. It is found in the sarcoplasmic reticulum. It localises to the mitochondrion. It catalyses the reaction Zn(2+)(in) = Zn(2+)(out). Zinc ion transporter mediating zinc entry from the cytosol into the lumen of organelles along the secretory pathway. By contributing to zinc ion homeostasis within the early secretory pathway, regulates the activation and folding of enzymes like alkaline phosphatases. This Rattus norvegicus (Rat) protein is Zinc transporter 7.